The primary structure comprises 321 residues: LIMR family protein SELMODRAFT_432210 (321 aa).

Transmembrane regions (helical) follow at residues 28–48 (KQLWWVVYIIDTVLVYLVIPF), 116–133 (CFSLSSNVTLMLIRLDLW), 139–159 (LCVFPTYVIALSILFTMFGGV), 240–260 (LVFGILGLALSIIWLLHILVF), and 284–304 (LLGTTPFAIFCYYFVMSVISG).

This sequence belongs to the LIMR family.

Its subcellular location is the membrane. This is LIMR family protein SELMODRAFT_432210 from Selaginella moellendorffii (Spikemoss).